A 330-amino-acid chain; its full sequence is Ketol-acid reductoisomerase (NADP(+)) (330 aa).

In terms of domain architecture, KARI N-terminal Rossmann spans 2–182 (VKVYYDADAN…GCTKAGVFET (181 aa)). NADP(+) is bound by residues 25-28 (YGSQ), R48, S51, and 83-86 (DEIQ). H108 is an active-site residue. G134 is an NADP(+) binding site. Residues 183 to 328 (SFREETETDL…ARLREMMPWL (146 aa)) enclose the KARI C-terminal knotted domain. D191, E195, E227, and E231 together coordinate Mg(2+). Position 252 (S252) interacts with substrate.

The protein belongs to the ketol-acid reductoisomerase family. The cofactor is Mg(2+).

It carries out the reaction (2R)-2,3-dihydroxy-3-methylbutanoate + NADP(+) = (2S)-2-acetolactate + NADPH + H(+). The catalysed reaction is (2R,3R)-2,3-dihydroxy-3-methylpentanoate + NADP(+) = (S)-2-ethyl-2-hydroxy-3-oxobutanoate + NADPH + H(+). The protein operates within amino-acid biosynthesis; L-isoleucine biosynthesis; L-isoleucine from 2-oxobutanoate: step 2/4. Its pathway is amino-acid biosynthesis; L-valine biosynthesis; L-valine from pyruvate: step 2/4. In terms of biological role, involved in the biosynthesis of branched-chain amino acids (BCAA). Catalyzes an alkyl-migration followed by a ketol-acid reduction of (S)-2-acetolactate (S2AL) to yield (R)-2,3-dihydroxy-isovalerate. In the isomerase reaction, S2AL is rearranged via a Mg-dependent methyl migration to produce 3-hydroxy-3-methyl-2-ketobutyrate (HMKB). In the reductase reaction, this 2-ketoacid undergoes a metal-dependent reduction by NADPH to yield (R)-2,3-dihydroxy-isovalerate. The polypeptide is Ketol-acid reductoisomerase (NADP(+)) (Desulforamulus reducens (strain ATCC BAA-1160 / DSM 100696 / MI-1) (Desulfotomaculum reducens)).